Consider the following 363-residue polypeptide: uncharacterized protein (363 aa).

The next 4 helical transmembrane spans lie at 34–54, 60–80, 91–111, and 112–132; these read YVYDIALIAISILCIVSIILW, LALFAIAPALAIGALGVTLLV, EIADTVAAVSLPFILTGTAAG, and LMFSAIAVGGGAVILANPLFL. Residues 232–245 are compositionally biased toward polar residues; sequence SSTTTHSTDSEQIL. The interval 232–363 is disordered; the sequence is SSTTTHSTDS…SSQKKKPSRK (132 aa). Composition is skewed to low complexity over residues 246 to 268 and 275 to 285; these read TSVSPQSSDTESSSSSSFHTPPN and DSNSSDSSSSS. Residues 322 to 342 are compositionally biased toward basic and acidic residues; the sequence is SRSERNAQHHRNKDQEQRQDS.

The protein belongs to the chlamydial CPn_0443/CT_005/TC_0273 family.

It localises to the cell membrane. This is an uncharacterized protein from Chlamydia trachomatis serovar D (strain ATCC VR-885 / DSM 19411 / UW-3/Cx).